Reading from the N-terminus, the 383-residue chain is S-adenosylmethionine synthase (383 aa).

H22 lines the ATP pocket. Position 24 (D24) interacts with Mg(2+). E50 serves as a coordination point for K(+). Positions 63 and 99 each coordinate L-methionine. The interval 99–109 (QSLEINQAVLK) is flexible loop. ATP contacts are provided by residues 160-162 (DMK), D235, 241-242 (RK), S258, and K262. L-methionine is bound at residue D235. Residue K266 participates in L-methionine binding.

Belongs to the AdoMet synthase family. As to quaternary structure, homotetramer; dimer of dimers. Mg(2+) serves as cofactor. K(+) is required as a cofactor.

It is found in the cytoplasm. It carries out the reaction L-methionine + ATP + H2O = S-adenosyl-L-methionine + phosphate + diphosphate. It participates in amino-acid biosynthesis; S-adenosyl-L-methionine biosynthesis; S-adenosyl-L-methionine from L-methionine: step 1/1. Catalyzes the formation of S-adenosylmethionine (AdoMet) from methionine and ATP. The overall synthetic reaction is composed of two sequential steps, AdoMet formation and the subsequent tripolyphosphate hydrolysis which occurs prior to release of AdoMet from the enzyme. The sequence is that of S-adenosylmethionine synthase from Mycoplasma genitalium (strain ATCC 33530 / DSM 19775 / NCTC 10195 / G37) (Mycoplasmoides genitalium).